The following is a 105-amino-acid chain: uncharacterized protein (105 aa).

The next 3 helical transmembrane spans lie at 14 to 34 (ILLMLRLAVTAVAVFLAIVAW), 41 to 61 (ETVCFIAGVLCMYLAQLFAFL), and 80 to 100 (VGFTLELLPLACFIASLIFTI).

The protein localises to the cell membrane. This is an uncharacterized protein from Treponema pallidum (strain Nichols).